Consider the following 117-residue polypeptide: Holo-[acyl-carrier-protein] synthase (117 aa).

Residues aspartate 8 and glutamate 58 each coordinate Mg(2+).

The protein belongs to the P-Pant transferase superfamily. AcpS family. Mg(2+) serves as cofactor.

The protein resides in the cytoplasm. The enzyme catalyses apo-[ACP] + CoA = holo-[ACP] + adenosine 3',5'-bisphosphate + H(+). In terms of biological role, transfers the 4'-phosphopantetheine moiety from coenzyme A to a Ser of acyl-carrier-protein. This Shouchella clausii (strain KSM-K16) (Alkalihalobacillus clausii) protein is Holo-[acyl-carrier-protein] synthase.